We begin with the raw amino-acid sequence, 530 residues long: T-complex protein 1 subunit zeta-2 (530 aa).

The protein belongs to the TCP-1 chaperonin family. In terms of assembly, component of the chaperonin-containing T-complex (TRiC), a heterooligomeric complex of about 850 to 900 kDa that forms two stacked rings, 12 to 16 nm in diameter. Testis-specific.

The protein localises to the cytoplasm. In terms of biological role, component of the chaperonin-containing T-complex (TRiC), a molecular chaperone complex that assists the folding of proteins upon ATP hydrolysis. The protein is T-complex protein 1 subunit zeta-2 (CCT6B) of Homo sapiens (Human).